The primary structure comprises 97 residues: Mitochondrial import inner membrane translocase subunit Tim8 A (97 aa).

The Twin CX3C motif signature appears at 43-66 (CWEKCMDKPGPKLDSRAEACFVNC). Cystine bridges form between Cys-43–Cys-66 and Cys-47–Cys-62. Phosphoserine is present on residues Ser-57, Ser-87, Ser-94, and Ser-96.

Belongs to the small Tim family. Heterohexamer; composed of 3 copies of TIMM8A and 3 copies of TIMM13, named soluble 70 kDa complex. Associates with the TIM22 complex, whose core is composed of TIMM22. In terms of tissue distribution, highly expressed in fetal and adult brain, followed by fetal lung, liver and kidney. Also expressed in heart, placenta, lung, liver, kidney, pancreas, skeletal muscle and heart.

Its subcellular location is the mitochondrion inner membrane. Functionally, mitochondrial intermembrane chaperone that participates in the import and insertion of some multi-pass transmembrane proteins into the mitochondrial inner membrane. Also required for the transfer of beta-barrel precursors from the TOM complex to the sorting and assembly machinery (SAM complex) of the outer membrane. Acts as a chaperone-like protein that protects the hydrophobic precursors from aggregation and guide them through the mitochondrial intermembrane space. The TIMM8-TIMM13 complex mediates the import of proteins such as TIMM23, SLC25A12/ARALAR1 and SLC25A13/ARALAR2, while the predominant TIMM9-TIMM10 70 kDa complex mediates the import of much more proteins. Probably necessary for normal neurologic development. The polypeptide is Mitochondrial import inner membrane translocase subunit Tim8 A (TIMM8A) (Homo sapiens (Human)).